Here is a 337-residue protein sequence, read N- to C-terminus: Inositol 2-dehydrogenase (337 aa).

This sequence belongs to the Gfo/Idh/MocA family. In terms of assembly, homotetramer.

It catalyses the reaction myo-inositol + NAD(+) = scyllo-inosose + NADH + H(+). Functionally, involved in the oxidation of myo-inositol (MI) to 2-keto-myo-inositol (2KMI or 2-inosose). The chain is Inositol 2-dehydrogenase from Ralstonia nicotianae (strain ATCC BAA-1114 / GMI1000) (Ralstonia solanacearum).